The sequence spans 442 residues: D-serine dehydratase 1 (442 aa).

N6-(pyridoxal phosphate)lysine is present on lysine 118.

This sequence belongs to the serine/threonine dehydratase family. DsdA subfamily. Monomer. Requires pyridoxal 5'-phosphate as cofactor.

The catalysed reaction is D-serine = pyruvate + NH4(+). This chain is D-serine dehydratase 1, found in Escherichia coli O6:K15:H31 (strain 536 / UPEC).